A 347-amino-acid polypeptide reads, in one-letter code: Heme A synthase (347 aa).

8 consecutive transmembrane segments (helical) span residues 17 to 37 (LANW…VGGI), 106 to 126 (GIGA…AIPA), 132 to 152 (MIGI…MVYS), 165 to 185 (LATH…TVLD), 202 to 222 (ALAI…AFVA), 260 to 280 (IVVQ…ALAV), 295 to 315 (AVAT…LTGV), and 317 to 337 (IAVA…LLWA). His-266 contacts heme. His-323 serves as a coordination point for heme.

It belongs to the COX15/CtaA family. Type 2 subfamily. Interacts with CtaB. Heme b serves as cofactor.

The protein resides in the cell membrane. The enzyme catalyses Fe(II)-heme o + 2 A + H2O = Fe(II)-heme a + 2 AH2. It functions in the pathway porphyrin-containing compound metabolism; heme A biosynthesis; heme A from heme O: step 1/1. Its function is as follows. Catalyzes the conversion of heme O to heme A by two successive hydroxylations of the methyl group at C8. The first hydroxylation forms heme I, the second hydroxylation results in an unstable dihydroxymethyl group, which spontaneously dehydrates, resulting in the formyl group of heme A. In Rhizorhabdus wittichii (strain DSM 6014 / CCUG 31198 / JCM 15750 / NBRC 105917 / EY 4224 / RW1) (Sphingomonas wittichii), this protein is Heme A synthase.